The following is a 608-amino-acid chain: MTSTLDLDKGCTVEELLRGCIEAFDDSGKVRDPQLVRMFLMMHPWYIPSSQLASKLLHFYQQSRKDNSNSLQMKTCHLVRYWISAFPAEFDLNPELAEQIKELKALLDQEGNRRHSSLIDIESVPTYKWKRQVTQRNPVEQKKRKMSLLFDHLEPMELAEHLTYLEYRSFCKILFQDYHSFVTHGCTVDNPVLERFISLFNSVSQWVQLMILSKPTATQRALVITHFVHVAERLLQLQNFNTLMAVVGGLSHSSISRLKETHSHVSPDTIKLWEGLTELVTATGNYSNYRRRLAACVGFRFPILGVHLKDLVALQLALPDWLDPGRTRLNGAKMRQLFCILEELAMVTSLRPPVQANPDLLSLLTVSLDQYQTEDELYQLSLQREPRSKSSPTSPTSCTPPPRPPVLEEWTSVAKPKLDQALVAEHIEKMVESVFRNFDVDGDGHISQEEFQIIRGNFPYLSAFGDLDQNQDGCISREEMISYFLRSSSVLGGRMGFVHNFQESNSLRPVACRHCKALILGIYKQGLKCRACGVNCHKQCKERLSVECRRRAQSVSLEGSAPSPSPTHTHHRAFSFSLPRPGRRSSRPPEIREEEVQSVEDGVFDIHL.

The N-terminal Ras-GEF domain occupies 4–126 (TLDLDKGCTV…SLIDIESVPT (123 aa)). Phosphoserine occurs at positions 116, 117, and 147. A Ras-GEF domain is found at 154–387 (EPMELAEHLT…YQLSLQREPR (234 aa)). Positions 382–405 (LQREPRSKSSPTSPTSCTPPPRPP) are disordered. 2 consecutive EF-hand domains span residues 426 to 461 (HIEK…FPYL) and 463 to 490 (AFGD…SSSV). 10 residues coordinate Ca(2+): D439, D441, D443, H445, E450, D468, N470, D472, C474, and E479. The Phorbol-ester/DAG-type zinc finger occupies 498–548 (VHNFQESNSLRPVACRHCKALILGIYKQGLKCRACGVNCHKQCKERLSVEC). Phosphoserine is present on residues S554 and S575. Positions 555-596 (VSLEGSAPSPSPTHTHHRAFSFSLPRPGRRSSRPPEIREEEV) are disordered.

The protein belongs to the RASGRP family. In terms of assembly, forms a signaling complex with RAP1 and BRAF. Interacts with F-actin. Interacts with RAP1. Detected in megakaryocytes, platelet and neutrophils but not in lymphocytes (at protein level). Isoform 1 and isoform 3 are detected in brain basal glanglia, heart, lung, spleen, liver and kidney interstitial cells.

The protein resides in the cytoplasm. It localises to the cytosol. Its subcellular location is the cell membrane. It is found in the synapse. The protein localises to the synaptosome. The protein resides in the cell projection. It localises to the ruffle membrane. In terms of biological role, functions as a calcium- and DAG-regulated nucleotide exchange factor specifically activating Rap through the exchange of bound GDP for GTP. May also activate other GTPases such as RRAS, RRAS2, NRAS, KRAS but not HRAS. Functions in aggregation of platelets and adhesion of T-lymphocytes and neutrophils probably through inside-out integrin activation. May function in the muscarinic acetylcholine receptor M1/CHRM1 signaling pathway. The protein is RAS guanyl-releasing protein 2 (Rasgrp2) of Mus musculus (Mouse).